A 652-amino-acid polypeptide reads, in one-letter code: Meiotic sister-chromatid recombination protein 3 (652 aa).

Disordered stretches follow at residues 123-151 (RTGT…SRTG), 304-406 (NNSK…SDQK), 470-576 (EQIQ…ESGA), and 594-652 (ATPV…INTK). Residues 125–141 (GTASSRGVGSRTGSMTG) are compositionally biased toward polar residues. The span at 316–336 (VQKQGVQQQQEVQHQGISQVQ) shows a compositional bias: low complexity. The span at 337–361 (NTEAKSVGRKSTMSKRMTLRDTPNA) shows a compositional bias: polar residues. A compositionally biased stretch (basic residues) spans 380 to 390 (TKRKSIFKSKK). 2 stretches are compositionally biased toward polar residues: residues 506 to 517 (QFSQENSGNQPP) and 524 to 544 (QYSQ…NFDT). Low complexity predominate over residues 545–569 (NASGHNINHNNNNHNNNNNTSSSSS). Positions 612 to 621 (SSPSIDNTPR) are enriched in polar residues. A compositionally biased stretch (basic residues) spans 640-652 (RLFKSNKTHINTK).

The protein resides in the cell membrane. May be involved in the control of meiotic sister-chromatid recombination. This is Meiotic sister-chromatid recombination protein 3 (MSC3) from Kluyveromyces lactis (strain ATCC 8585 / CBS 2359 / DSM 70799 / NBRC 1267 / NRRL Y-1140 / WM37) (Yeast).